The chain runs to 676 residues: MGVTGILQLPRDRFKRTSFFLWVIILFQRTFSIPLGVIHNSTLQVSDVDKLVCRDKLSSTNQLRSVGLNLEGNGVATDVPSATKRWGFRSGVPPKVVNYEAGEWAENCYNLEIKKPDGSECLPAAPDGIRGFPRCRYVHKVSGTGPCAGDFAFHKEGAFFLYDRLASTVIYRGTTFAEGVVAFLILPQAKKDFFSSHPLREPVNATEDPSSGYYSTTIRYQATGFGTNETEYLFEVDNLTYVQLESRFTPQFLLQLNETIYTSGKRSNTTGKLIWKVNPEIDTTIGEWAFWETKKNLTRKIRSEELSFTAVSNRAKNISGQSPARTSSDPGTNTTTEDHKIMASENSSAMVQVHSQGREAAVSHLTTLATISTSPQPPTTKPGPDNSTHNTPVYKLDISEATQVEQHHRRTDNDSTASDTPPATTAAGPLKAENTNTSKGTDLLDPATTTSPQNHSETAGNNNTHHQDTGEESASSGKLGLITNTIAGVAGLITGGRRARREAIVNAQPKCNPNLHYWTTQDEGAAIGLAWIPYFGPAAEGIYTEGLMHNQDGLICGLRQLANETTQALQLFLRATTELRTFSILNRKAIDFLLQRWGGTCHILGPDCCIEPHDWTKNITDKIDQIIHDFVDKTLPDQGDNDNWWTGWRQWIPAGIGVTGVIIAVIALFCICKFVF.

A signal peptide spans 1–32 (MGVTGILQLPRDRFKRTSFFLWVIILFQRTFS). The Extracellular segment spans residues 33 to 650 (IPLGVIHNST…NDNWWTGWRQ (618 aa)). Residue Asn40 is glycosylated (N-linked (GlcNAc...) asparagine; by host). Intrachain disulfides connect Cys53-Cys609, Cys108-Cys135, Cys121-Cys147, Cys511-Cys556, and Cys601-Cys608. The receptor-binding stretch occupies residues 54–201 (RDKLSSTNQL…DFFSSHPLRE (148 aa)). Residues Asn204, Asn228, Asn238, Asn257, Asn268, Asn296, Asn317, Asn333, Asn346, Asn386, and Asn413 are each glycosylated (N-linked (GlcNAc...) asparagine; by host). The interval 305–485 (ELSFTAVSNR…SGKLGLITNT (181 aa)) is mucin-like region. The span at 314-335 (RAKNISGQSPARTSSDPGTNTT) shows a compositional bias: polar residues. The interval 314-337 (RAKNISGQSPARTSSDPGTNTTTE) is disordered. The disordered stretch occupies residues 370–478 (TISTSPQPPT…TGEESASSGK (109 aa)). Positions 414–427 (DSTASDTPPATTAA) are enriched in low complexity. 3 N-linked (GlcNAc...) asparagine; by host glycosylation sites follow: Asn436, Asn454, and Asn462. Over residues 447 to 464 (ATTTSPQNHSETAGNNNT) the composition is skewed to polar residues. The segment at 524-539 (GAAIGLAWIPYFGPAA) is fusion peptide. A coiled-coil region spans residues 554-595 (LICGLRQLANETTQALQLFLRATTELRTFSILNRKAIDFLLQ). N-linked (GlcNAc...) asparagine; by host glycosylation occurs at Asn563. Residues 615–634 (WTKNITDKIDQIIHDFVDKT) are a coiled coil. The N-linked (GlcNAc...) asparagine; by host glycan is linked to Asn618. A helical membrane pass occupies residues 651–671 (WIPAGIGVTGVIIAVIALFCI). 2 S-palmitoyl cysteine; by host lipidation sites follow: Cys670 and Cys672. Over 672 to 676 (CKFVF) the chain is Cytoplasmic.

This sequence belongs to the filoviruses glycoprotein family. In terms of assembly, homotrimer; each monomer consists of a GP1 and a GP2 subunit linked by disulfide bonds. The resulting peplomers (GP1,2) protrude from the virus surface as spikes. Interacts with host integrin alpha-V/ITGAV. Interacts with host CLEC10A. Binds also to host CD209 and CLEC4M/DC-SIGN(R). Interacts with host FOLR1. Interacts with BST2; this interaction inhibits the antiviral effect of BST2 and this allows viral release from infected cells. Interacts with host FCN1; this interaction enhances viral entry. Interacts with host TLR4; this interaction induces cell death in T-lymphocytes or proinflammatory cytokines and SOCS1 production in monocytes. Interacts with host entry receptor NPC1. As to quaternary structure, GP1 and GP2delta are part of GP1,2delta soluble complexes released by ectodomain shedding. The signal peptide region modulates GP's high mannose glycosylation, thereby determining the efficiency of the interactions with DC-SIGN(R). In terms of processing, N-glycosylated. Post-translationally, O-glycosylated in the mucin-like region. Palmitoylation of GP2 is not required for its function. In terms of processing, specific enzymatic cleavages in vivo yield mature proteins. The precursor is processed into GP1 and GP2 by host cell furin in the trans Golgi, and maybe by other host proteases, to yield the mature GP1 and GP2 proteins. The cleavage site corresponds to the furin optimal cleavage sequence [KR]-X-[KR]-R. This cleavage does not seem to be required for function. After the internalization of the virus into cell endosomes, GP1 C-terminus is removed by the endosomal proteases cathepsin B, cathepsin L, or both, leaving a 19-kDa N-terminal fragment which is further digested by cathepsin B. Proteolytic processing of GP1,2 by host ADAM17 can remove the transmembrane anchor of GP2 and leads to shedding of complexes consisting in GP1 and truncated GP2 (GP1,2delta).

The protein resides in the virion membrane. Its subcellular location is the host cell membrane. The protein localises to the secreted. Its function is as follows. Trimeric GP1,2 complexes form the virion surface spikes and mediate the viral entry processes, with GP1 acting as the receptor-binding subunit and GP2 as the membrane fusion subunit. At later times of infection, down-regulates the expression of various host cell surface molecules that are essential for immune surveillance and cell adhesion. Down-modulates several integrins including ITGA1, ITGA2, ITGA3, ITGA4, ITGA5, ITGA6, ITGAV and ITGB1. This decrease in cell adhesion molecules may lead to cell detachment, contributing to the disruption of blood vessel integrity and hemorrhages developed during infection (cytotoxicity). Interacts with host TLR4 and thereby stimulates the differentiation and activation of monocytes leading to bystander death of T-lymphocytes. Down-regulates as well the function of host natural killer cells. Counteracts the antiviral effect of host BST2/tetherin that restricts release of progeny virions from infected cells. However, cooperates with VP40 and host BST2 to activate canonical NF-kappa-B pathway in a manner dependent on neddylation. Functions as a decoy for anti-GP1,2 antibodies thereby contributing to viral immune evasion. Interacts and activates host macrophages and dendritic cells inducing up-regulation of cytokine transcription. This effect is mediated throught activation of host TLR4. Functionally, responsible for binding to the receptor(s) on target cells. Interacts with CD209/DC-SIGN and CLEC4M/DC-SIGNR which act as cofactors for virus entry into dendritic cells (DCs) and endothelial cells. Binding to the macrophage specific lectin CLEC10A also seems to enhance virus infectivity. Interaction with FOLR1/folate receptor alpha may be a cofactor for virus entry in some cell types, although results are contradictory. Members of the Tyro3 receptor tyrosine kinase family also seem to be cell entry factors in filovirus infection. Once attached, the virions are internalized through clathrin-dependent endocytosis and/or macropinocytosis. After internalization of the virus into the endosomes of the host cell, proteolysis of GP1 by two cysteine proteases, CTSB/cathepsin B and CTSL/cathepsin L removes the glycan cap and allows GP1 binding to the host entry receptor NPC1. NPC1-binding, Ca(2+) and acidic pH induce a conformational change of GP2, which unmasks its fusion peptide and permit membranes fusion. In terms of biological role, acts as a class I viral fusion protein. Under the current model, the protein has at least 3 conformational states: pre-fusion native state, pre-hairpin intermediate state, and post-fusion hairpin state. During viral and target cell membrane fusion, the coiled coil regions (heptad repeats) assume a trimer-of-hairpins structure, positioning the fusion peptide in close proximity to the C-terminal region of the ectodomain. The formation of this structure appears to drive apposition and subsequent fusion of viral and target cell membranes. Responsible for penetration of the virus into the cell cytoplasm by mediating the fusion of the membrane of the endocytosed virus particle with the endosomal membrane. Low pH in endosomes induces an irreversible conformational change in GP2, releasing the fusion hydrophobic peptide. This chain is Envelope glycoprotein (GP), found in Zaire ebolavirus (strain Kikwit-95) (ZEBOV).